The following is a 417-amino-acid chain: Serine protease hepsin (417 aa).

Topologically, residues 1-23 (MAQKEGGRTVPCCSRPKVAALTA) are cytoplasmic. A helical; Signal-anchor for type II membrane protein membrane pass occupies residues 24-44 (GTLLLLTAIGAASWAIVAVLL). Residues 45–417 (RSDQEPLYPV…SEASGMVTQL (373 aa)) lie on the Extracellular side of the membrane. An SRCR domain is found at 54–151 (VQVSSADARL…RGRFLATICQ (98 aa)). 8 cysteine pairs are disulfide-bonded: Cys77/Cys140, Cys90/Cys150, Cys119/Cys138, Cys153/Cys277, Cys188/Cys204, Cys291/Cys359, Cys322/Cys338, and Cys349/Cys381. Asn112 carries N-linked (GlcNAc...) asparagine glycosylation. The Peptidase S1 domain maps to 163-405 (IVGGRDTSLG…FREWIFQAIK (243 aa)). Residues His203 and Asp257 each act as charge relay system in the active site. Ser353 functions as the Charge relay system in the catalytic mechanism.

The protein belongs to the peptidase S1 family.

It localises to the membrane. It catalyses the reaction Cleavage after basic amino-acid residues, with Arg strongly preferred to Lys.. Plays an essential role in cell growth and maintenance of cell morphology. May mediate the activating cleavage of HGF and MST1/HGFL. Plays a role in the proteolytic processing of ACE2. This Pongo abelii (Sumatran orangutan) protein is Serine protease hepsin (HPN).